A 211-amino-acid polypeptide reads, in one-letter code: Urease accessory protein UreG (211 aa).

Residue 16–23 (GPVGSGKT) participates in GTP binding.

It belongs to the SIMIBI class G3E GTPase family. UreG subfamily. Homodimer. UreD, UreF and UreG form a complex that acts as a GTP-hydrolysis-dependent molecular chaperone, activating the urease apoprotein by helping to assemble the nickel containing metallocenter of UreC. The UreE protein probably delivers the nickel.

The protein resides in the cytoplasm. In terms of biological role, facilitates the functional incorporation of the urease nickel metallocenter. This process requires GTP hydrolysis, probably effectuated by UreG. This chain is Urease accessory protein UreG, found in Janthinobacterium sp. (strain Marseille) (Minibacterium massiliensis).